Consider the following 449-residue polypeptide: Probable mitochondrial chaperone bcs1 (449 aa).

Residues Met1–Ser20 are Mitochondrial intermembrane-facing. Residues Gly21–Leu41 form a helical membrane-spanning segment. The Mitochondrial matrix segment spans residues Arg42–Val449. Gly249 to Thr256 provides a ligand contact to ATP.

Belongs to the AAA ATPase family. BCS1 subfamily.

The protein resides in the mitochondrion inner membrane. It catalyses the reaction ATP + H2O = ADP + phosphate + H(+). In terms of biological role, chaperone necessary for the incorporation of Rieske iron-sulfur protein rip1 into the mitochondrial respiratory chain complex III. The polypeptide is Probable mitochondrial chaperone bcs1 (Schizosaccharomyces pombe (strain 972 / ATCC 24843) (Fission yeast)).